We begin with the raw amino-acid sequence, 606 residues long: Probable methyltransferase PMT5 (606 aa).

At 1–20 (MRGSWYKSVSSVFGLRPRIR) the chain is on the cytoplasmic side. Residues 21–41 (GLLFFIVGVVALVTILAPLTS) form a helical; Signal-anchor for type II membrane protein membrane-spanning segment. At 42-606 (NSYDSSSSST…LVCQKPFIKK (565 aa)) the chain is on the lumenal side. N-linked (GlcNAc...) asparagine glycosylation is found at Asn-101 and Asn-409.

The protein belongs to the methyltransferase superfamily.

Its subcellular location is the endoplasmic reticulum membrane. The protein is Probable methyltransferase PMT5 of Arabidopsis thaliana (Mouse-ear cress).